The following is a 296-amino-acid chain: Tyrosine recombinase XerC (296 aa).

The region spanning 1-84 is the Core-binding (CB) domain; that stretch reads MNKIQESFLY…TLRSFYEFWM (84 aa). Residues 105–286 enclose the Tyr recombinase domain; that stretch reads YLPHFFYEEE…SNQQLRKVYL (182 aa). Active-site residues include R145, K169, H238, R241, and H264. Catalysis depends on Y273, which acts as the O-(3'-phospho-DNA)-tyrosine intermediate.

It belongs to the 'phage' integrase family. XerC subfamily. Forms a cyclic heterotetrameric complex composed of two molecules of XerC and two molecules of XerD.

The protein localises to the cytoplasm. Its function is as follows. Site-specific tyrosine recombinase, which acts by catalyzing the cutting and rejoining of the recombining DNA molecules. The XerC-XerD complex is essential to convert dimers of the bacterial chromosome into monomers to permit their segregation at cell division. It also contributes to the segregational stability of plasmids. The sequence is that of Tyrosine recombinase XerC from Staphylococcus carnosus (strain TM300).